Consider the following 283-residue polypeptide: Gap junction beta-1 protein (283 aa).

Topologically, residues 1 to 22 (MNWTGLYTLLSGVNRHSTAIGR) are cytoplasmic. A helical membrane pass occupies residues 23-45 (VWLSVIFIFRIMVLVVAAESVWG). The Extracellular portion of the chain corresponds to 46-75 (DEKSSFICNTLQPGCNSVCYDQFFPISHVR). The helical transmembrane segment at 76–95 (LWSLQLILVSTPALLVAMHV) threads the bilayer. Residues 96 to 130 (AHQQHIEKKMLRLEGHGDPLHLEEVKRHKVHISGT) are Cytoplasmic-facing. Residues 131-153 (LWWAYVISVVFRLLFEAVFMYVF) form a helical membrane-spanning segment. Over 154-191 (YLLYPGYAMVRLVKCDVYPCPNTVDCFVSRPTEKTVFT) the chain is Extracellular. A helical transmembrane segment spans residues 192 to 214 (VFMLAASGICIILNVAEVVYLII). Residues 215-283 (RACARRAQRR…AEKSDRCSAC (69 aa)) lie on the Cytoplasmic side of the membrane. Phosphoserine is present on residues serine 233, serine 258, serine 266, and serine 277.

The protein belongs to the connexin family. Beta-type (group I) subfamily. In terms of assembly, a connexon is composed of a hexamer of connexins. Interacts with CNST.

Its subcellular location is the cell membrane. The protein resides in the cell junction. The protein localises to the gap junction. Its function is as follows. One gap junction consists of a cluster of closely packed pairs of transmembrane channels, the connexons, through which materials of low MW diffuse from one cell to a neighboring cell. In Macaca fascicularis (Crab-eating macaque), this protein is Gap junction beta-1 protein (GJB1).